Consider the following 69-residue polypeptide: Cell division protein CrgA (69 aa).

Transmembrane regions (helical) follow at residues 14–34 (VWFP…MVLF) and 45–65 (AVGT…FAMM).

This sequence belongs to the CrgA family.

It is found in the cell membrane. Its function is as follows. Involved in cell division. This Tropheryma whipplei (strain TW08/27) (Whipple's bacillus) protein is Cell division protein CrgA.